The following is a 79-amino-acid chain: Acyl carrier protein (79 aa).

The Carrier domain maps to 2–77; sequence ADHASKIKDI…DAVAYLEAKV (76 aa). Serine 37 carries the post-translational modification O-(pantetheine 4'-phosphoryl)serine.

This sequence belongs to the acyl carrier protein (ACP) family. Post-translationally, 4'-phosphopantetheine is transferred from CoA to a specific serine of apo-ACP by AcpS. This modification is essential for activity because fatty acids are bound in thioester linkage to the sulfhydryl of the prosthetic group.

The protein resides in the cytoplasm. It functions in the pathway lipid metabolism; fatty acid biosynthesis. Carrier of the growing fatty acid chain in fatty acid biosynthesis. This chain is Acyl carrier protein, found in Gemmatimonas aurantiaca (strain DSM 14586 / JCM 11422 / NBRC 100505 / T-27).